The chain runs to 754 residues: Phosphoribosylformylglycinamidine synthase subunit PurL (754 aa).

Positions 1-21 (MLDTVEHAATTPDQPQPYGEL) are disordered. Residue His54 is part of the active site. ATP-binding residues include Tyr57 and Lys101. A Mg(2+)-binding site is contributed by Glu103. Substrate contacts are provided by residues 104–107 (SHNH) and Arg126. Catalysis depends on His105, which acts as the Proton acceptor. Asp127 provides a ligand contact to Mg(2+). Gln252 serves as a coordination point for substrate. Asp280 contributes to the Mg(2+) binding site. A substrate-binding site is contributed by 324–326 (ESQ). Positions 512 and 549 each coordinate ATP. A Mg(2+)-binding site is contributed by Asn550. Residue Ser552 participates in substrate binding.

This sequence belongs to the FGAMS family. In terms of assembly, monomer. Part of the FGAM synthase complex composed of 1 PurL, 1 PurQ and 2 PurS subunits.

The protein localises to the cytoplasm. It catalyses the reaction N(2)-formyl-N(1)-(5-phospho-beta-D-ribosyl)glycinamide + L-glutamine + ATP + H2O = 2-formamido-N(1)-(5-O-phospho-beta-D-ribosyl)acetamidine + L-glutamate + ADP + phosphate + H(+). The protein operates within purine metabolism; IMP biosynthesis via de novo pathway; 5-amino-1-(5-phospho-D-ribosyl)imidazole from N(2)-formyl-N(1)-(5-phospho-D-ribosyl)glycinamide: step 1/2. Part of the phosphoribosylformylglycinamidine synthase complex involved in the purines biosynthetic pathway. Catalyzes the ATP-dependent conversion of formylglycinamide ribonucleotide (FGAR) and glutamine to yield formylglycinamidine ribonucleotide (FGAM) and glutamate. The FGAM synthase complex is composed of three subunits. PurQ produces an ammonia molecule by converting glutamine to glutamate. PurL transfers the ammonia molecule to FGAR to form FGAM in an ATP-dependent manner. PurS interacts with PurQ and PurL and is thought to assist in the transfer of the ammonia molecule from PurQ to PurL. This chain is Phosphoribosylformylglycinamidine synthase subunit PurL, found in Mycobacterium bovis (strain ATCC BAA-935 / AF2122/97).